The following is a 287-amino-acid chain: BURP domain-containing protein 2 (287 aa).

An N-terminal signal peptide occupies residues 1–21 (MARSLAALLLLLVAAAGASHA). The region spanning 67 to 287 (FFLEKDLFPG…PQDDMLWVRN (221 aa)) is the BURP domain.

As to expression, expressed in shoot.

The sequence is that of BURP domain-containing protein 2 (BURP2) from Oryza sativa subsp. japonica (Rice).